The chain runs to 278 residues: Nucleotide-binding protein Tbd_0529 (278 aa).

8–15 (GLSGSGKS) serves as a coordination point for ATP. 57-60 (DARS) is a GTP binding site.

The protein belongs to the RapZ-like family.

Its function is as follows. Displays ATPase and GTPase activities. The polypeptide is Nucleotide-binding protein Tbd_0529 (Thiobacillus denitrificans (strain ATCC 25259 / T1)).